A 1677-amino-acid chain; its full sequence is Zinc finger protein 831 (1677 aa).

Pro residues predominate over residues 1-26 (MEVPEPTCPAPPARDQPAPTPGPPGA). The disordered stretch occupies residues 1 to 43 (MEVPEPTCPAPPARDQPAPTPGPPGAPGGQASPHLTLGPVLLP). 2 consecutive C2H2-type zinc fingers follow at residues 144–166 (YLCP…IRSH) and 172–196 (FPCA…TQTH). Disordered regions lie at residues 193-250 (TQTH…SPGA), 270-398 (GSAF…AGLE), 516-557 (WLEP…PSGH), 663-931 (EAAG…VLSA), 950-1062 (TPLP…TCEA), 1100-1119 (NWEL…SGPL), 1137-1176 (LTRP…PFPS), 1216-1243 (LRDE…GPAQ), 1510-1597 (SAES…GQYG), and 1620-1677 (LITR…VIEI). 2 stretches are compositionally biased toward basic and acidic residues: residues 216–232 (EGDK…RGES) and 325–341 (KPWD…KCES). Residues 376–385 (EGGPGPGPGV) show a composition bias toward gly residues. Residues 391 to 423 (GAREAGLELEKKRLEERIAQLISHNQAVVDDAQ) are a coiled coil. Basic and acidic residues-rich tracts occupy residues 517-526 (LEPREPRDPW), 674-684 (QDRRTPVHEDI), 707-727 (PTKH…RVEE), and 813-834 (SGED…HSWK). 2 stretches are compositionally biased toward low complexity: residues 880 to 894 (LESS…SVAL) and 905 to 919 (PLHP…HPSL). Low complexity predominate over residues 1153 to 1170 (SSHSGTSRSHSTRSPHST). Residues 1518-1531 (QTAGRTLTSSSPDS) show a composition bias toward polar residues. Basic and acidic residues predominate over residues 1649–1662 (RSLEGMRKQTRVEF).

This chain is Zinc finger protein 831 (ZNF831), found in Homo sapiens (Human).